Reading from the N-terminus, the 540-residue chain is Ribonuclease Y (540 aa).

A helical membrane pass occupies residues 4-24; that stretch reads TILVPVAVAIVSVLVGGCAGY. The KH domain maps to 230–293; sequence TVSVVNLPSD…EIAKRALERL (64 aa). The HD domain occupies 356–449; it reads VLSHSIEVGK…VVAADTISSA (94 aa).

The protein belongs to the RNase Y family.

The protein localises to the cell membrane. In terms of biological role, endoribonuclease that initiates mRNA decay. The protein is Ribonuclease Y of Lactobacillus johnsonii (strain CNCM I-12250 / La1 / NCC 533).